The chain runs to 394 residues: Ribulose bisphosphate carboxylase large chain (394 aa).

N6,N6,N6-trimethyllysine is present on Lys-5. Substrate contacts are provided by Asn-114 and Thr-164. The active-site Proton acceptor is Lys-166. Residue Lys-168 participates in substrate binding. Residues Lys-192, Asp-194, and Glu-195 each coordinate Mg(2+). Lys-192 is subject to N6-carboxylysine. His-285 functions as the Proton acceptor in the catalytic mechanism. Residues Arg-286, His-318, and Ser-370 each coordinate substrate.

The protein belongs to the RuBisCO large chain family. Type I subfamily. Heterohexadecamer of 8 large chains and 8 small chains. It depends on Mg(2+) as a cofactor.

It is found in the plastid. The protein localises to the chloroplast. The enzyme catalyses 2 (2R)-3-phosphoglycerate + 2 H(+) = D-ribulose 1,5-bisphosphate + CO2 + H2O. It catalyses the reaction D-ribulose 1,5-bisphosphate + O2 = 2-phosphoglycolate + (2R)-3-phosphoglycerate + 2 H(+). RuBisCO catalyzes two reactions: the carboxylation of D-ribulose 1,5-bisphosphate, the primary event in carbon dioxide fixation, as well as the oxidative fragmentation of the pentose substrate in the photorespiration process. Both reactions occur simultaneously and in competition at the same active site. The chain is Ribulose bisphosphate carboxylase large chain (rbcL) from Nymphaea odorata (White water lily).